The following is a 303-amino-acid chain: 1-phosphofructokinase (303 aa).

248 to 249 (GD) provides a ligand contact to ATP. Catalysis depends on aspartate 249, which acts as the Proton acceptor.

Belongs to the carbohydrate kinase PfkB family.

The enzyme catalyses beta-D-fructose 1-phosphate + ATP = beta-D-fructose 1,6-bisphosphate + ADP + H(+). Functionally, catalyzes the ATP-dependent phosphorylation of fructose-l-phosphate to fructose-l,6-bisphosphate. In Bacillus subtilis (strain 168), this protein is 1-phosphofructokinase (fruK).